The following is a 503-amino-acid chain: MDSDNDNDFCDNVDSGNVSSGDDGDDDFGMEVDLPSSADRQMDQDDYQYKVLTTDEIVQHQREIIDEANLLLKLPTPTTRILLNHFKWDKEKLLEKYFDDNTDEFFKCAHVINPFNATEAIKQKTSRSQCEECEICFSQLPPDSMAGLECGHRFCMPCWHEYLSTKIVAEGLGQTISCAAHGCDILVDDVTVANLVTDARVRVKYQQLITNSFVECNQLLRWCPSVDCTYAVKVPYAEPRRVHCKCGHVFCFACGENWHDPVKCRWLKKWIKKCDDDSETSNWIAANTKECPRCSVTIEKDGGCNHMVCKNQNCKNEFCWVCLGSWEPHGSSWYNCNRYDEDEAKTARDAQEKLRSSLARYLHYYNRYMNHMQSMKFENKLYASVKQKMEEMQQHNMSWIEVQFLKKAVDILCQCRQTLMYTYVFAYYLKKNNQSMIFEDNQKDLESATEMLSEYLERDITSENLADIKQKVQDKYRYCEKRCSVLLKHVHEGYDKEWWEYTE.

Over residues 1 to 11 (MDSDNDNDFCD) the composition is skewed to acidic residues. Positions 1–40 (MDSDNDNDFCDNVDSGNVSSGDDGDDDFGMEVDLPSSADR) are disordered. Residues 12 to 21 (NVDSGNVSSG) show a composition bias toward low complexity. Positions 129 to 340 (QCEECEICFS…SSWYNCNRYD (212 aa)) are TRIAD supradomain. Zn(2+)-binding residues include Cys-133, Cys-136, Cys-150, His-152, Cys-155, Cys-158, Cys-178, Cys-183, Cys-223, Cys-228, Cys-244, Cys-246, Cys-251, Cys-254, His-259, Cys-264, Cys-291, and Cys-294. The RING-type 1 zinc finger occupies 133–183 (CEICFSQLPPDSMAGLECGHRFCMPCWHEYLSTKIVAEGLGQTISCAAHGC). The interval 133-201 (CEICFSQLPP…VANLVTDARV (69 aa)) is important for interaction with Ubc10. Residues 203–264 (VKYQQLITNS…GENWHDPVKC (62 aa)) form an IBR-type zinc finger. The RING-type 2; atypical zinc finger occupies 291 to 322 (CPRCSVTIEKDGGCNHMVCKNQNCKNEFCWVC). Cys-304 is a catalytic residue. Zn(2+)-binding residues include Cys-309, Cys-314, Cys-319, Cys-322, His-329, and Cys-336. Residues 341-361 (EDEAKTARDAQEKLRSSLARY) are a coiled coil.

The protein belongs to the RBR family. Ariadne subfamily. As to quaternary structure, can form homodimers. Interacts (via RING-type 1 zinc finger) with Ubc10. Interacts with the LINC complex member koi. Interacts with park. Interacts with ari-2. Specifically interacts with isoform ECR-A of EcR. In terms of processing, autophosphorylated. In terms of tissue distribution, widely expressed, with prominent levels in the nervous system and female gonads.

The protein localises to the cytoplasm. The protein resides in the nucleus. It carries out the reaction [E2 ubiquitin-conjugating enzyme]-S-ubiquitinyl-L-cysteine + [acceptor protein]-L-lysine = [E2 ubiquitin-conjugating enzyme]-L-cysteine + [acceptor protein]-N(6)-ubiquitinyl-L-lysine.. In terms of biological role, atypical E3 ubiquitin-protein ligase, which catalyzes ubiquitination of target proteins together with ubiquitin-conjugating enzyme E2 Ubc10. Controls the subcellular localization and morphology of muscle nuclei (myonuclei) by regulating the protein levels and distribution of the LINC (LInker of Nucleoskeleton and Cytoskeleton) complex. Functions by mediating the monoubiquitination of the LINC complex subunit koi leading to its subsequent proteasomal degradation. Appears to function, at least partially redundantly, with the RBR E3 ligase family member park in nuclear localization and morphology. Likely to function in metamorphosis by regulating the proteins levels of EcR isoform A (ECR-A) and its heterodimeric partner usp, via the ubiquitination and subsequent degradation of ECR-A. The protein is E3 ubiquitin-protein ligase ariadne-1 of Drosophila melanogaster (Fruit fly).